Consider the following 179-residue polypeptide: Large ribosomal subunit protein uL5 (179 aa).

It belongs to the universal ribosomal protein uL5 family. As to quaternary structure, part of the 50S ribosomal subunit; part of the 5S rRNA/L5/L18/L25 subcomplex. Contacts the 5S rRNA and the P site tRNA. Forms a bridge to the 30S subunit in the 70S ribosome.

This is one of the proteins that bind and probably mediate the attachment of the 5S RNA into the large ribosomal subunit, where it forms part of the central protuberance. In the 70S ribosome it contacts protein S13 of the 30S subunit (bridge B1b), connecting the 2 subunits; this bridge is implicated in subunit movement. Contacts the P site tRNA; the 5S rRNA and some of its associated proteins might help stabilize positioning of ribosome-bound tRNAs. The chain is Large ribosomal subunit protein uL5 from Aliivibrio salmonicida (strain LFI1238) (Vibrio salmonicida (strain LFI1238)).